The primary structure comprises 190 residues: Dynein axonemal light chain 1 (190 aa).

The residue at position 2 (A2) is an N-acetylalanine. LRR repeat units follow at residues 47–69 (LANC…LNGL), 70–93 (KNLR…AVGD), 95–114 (LEEL…IHVM), and 115–138 (RKLK…KLAE). A Phosphoserine modification is found at S56.

This sequence belongs to the dynein light chain LC1-type family. As to quaternary structure, interacts with ZMYND10 (via C-terminus). Interacts with DNAH5, a outer arm dynein heavy chain. Interacts with tubulin located within the A-tubule of the outer doublets in a ATP-independent manner.

Its subcellular location is the cytoplasm. It is found in the cytoskeleton. The protein localises to the cilium axoneme. In terms of biological role, part of the multisubunit axonemal ATPase complexes that generate the force for cilia motility and govern beat frequency. Component of the outer arm dynein (ODA). May be involved in a mechanosensory feedback mechanism controlling ODA activity based on external conformational cues by tethering the outer arm dynein heavy chain (DNAH5) to the microtubule within the axoneme. Important for ciliary function in the airways and for the function of the cilia that produce the nodal flow essential for the determination of the left-right asymmetry. The chain is Dynein axonemal light chain 1 from Rattus norvegicus (Rat).